Here is a 359-residue protein sequence, read N- to C-terminus: 3-dehydroquinate synthase (359 aa).

NAD(+)-binding positions include 71 to 76, 105 to 109, 129 to 130, K142, K151, and 169 to 172; these read DGEQYK, GVIGD, TT, and CLST. Positions 184, 247, and 264 each coordinate Zn(2+).

This sequence belongs to the sugar phosphate cyclases superfamily. Dehydroquinate synthase family. Requires Co(2+) as cofactor. It depends on Zn(2+) as a cofactor. NAD(+) is required as a cofactor.

It localises to the cytoplasm. It carries out the reaction 7-phospho-2-dehydro-3-deoxy-D-arabino-heptonate = 3-dehydroquinate + phosphate. It participates in metabolic intermediate biosynthesis; chorismate biosynthesis; chorismate from D-erythrose 4-phosphate and phosphoenolpyruvate: step 2/7. Functionally, catalyzes the conversion of 3-deoxy-D-arabino-heptulosonate 7-phosphate (DAHP) to dehydroquinate (DHQ). The sequence is that of 3-dehydroquinate synthase from Shewanella halifaxensis (strain HAW-EB4).